Consider the following 310-residue polypeptide: Vomeronasal type-1 receptor 97 (310 aa).

The Extracellular portion of the chain corresponds to 1–19; the sequence is MNKDNILHTDTNIKITLFS. A helical transmembrane segment spans residues 20–40; sequence EVSIGISANSALFFSHLFMLF. Topologically, residues 41–49 are cytoplasmic; it reads EKNRSKPID. Residues 50 to 70 form a helical membrane-spanning segment; it reads LYIAFLSLTQLMLLITIGLIA. Topologically, residues 71-93 are extracellular; the sequence is ADMFMSRGRWDSTTCQSLIYLHR. The cysteines at positions 85 and 172 are disulfide-linked. Residues 94 to 114 form a helical membrane-spanning segment; sequence LLRGFTLCATCLLNVLWTITL. Residues 115–131 are Cytoplasmic-facing; it reads SPRSSCLTTFKHKSPHH. Residues 132-152 traverse the membrane as a helical segment; that stretch reads ISGAFLFFCVLYISFGSHLFL. Topologically, residues 153–190 are extracellular; it reads STIATPNLTSDNFMYVTQSCSFLPMSYSRTSMFSTPMA. The N-linked (GlcNAc...) asparagine glycan is linked to Asn159. Residues 191–211 form a helical membrane-spanning segment; sequence IREALLIGLIGLSSGYMVAFL. The Cytoplasmic segment spans residues 212–238; the sequence is WRHKNQARHLHSTSLSSKVSPEQRATR. A helical transmembrane segment spans residues 239–259; that stretch reads TIMILMSFFVVLYILENVVFY. Residues 260 to 269 lie on the Extracellular side of the membrane; it reads SRMTFKDGSM. The chain crosses the membrane as a helical span at residues 270-290; that stretch reads FYCVQIIVSHSYATISPFVFI. At 291-310 the chain is on the cytoplasmic side; sequence CTEKRIIKLWGSMSSRIVSI.

It belongs to the G-protein coupled receptor 1 family. As to expression, expressed in 1-4% of neurons of the vomeronasal organ. Only one pheromone receptor gene may be expressed in a particular neuron. Not expressed in the main olfactory epithelium.

It localises to the cell membrane. Functionally, putative pheromone receptor implicated in the regulation of social as well as reproductive behavior. The protein is Vomeronasal type-1 receptor 97 (Vom1r97) of Rattus norvegicus (Rat).